The chain runs to 289 residues: Melatonin receptor type 1B (289 aa).

Over 1-2 (GN) the chain is Cytoplasmic. A helical membrane pass occupies residues 3–23 (AFVVSLALADLVVALYPYPLV). Residues 24 to 41 (LLAIFHNGWTLGEMHCKV) are Extracellular-facing. The cysteines at positions 39 and 116 are disulfide-linked. The chain crosses the membrane as a helical span at residues 42–62 (SGFVMGLSVIGSIFNITAIAI). Topologically, residues 63 to 81 (NRYCYICHSFAYDKVYSCW) are cytoplasmic. Residues 82 to 102 (NTMLYVSLIWVLTVIATVPNF) traverse the membrane as a helical segment. Topologically, residues 103-126 (FVGSLKYDPRIYSCTFVQTASSYY) are extracellular. The chain crosses the membrane as a helical span at residues 127–147 (TIAVVVIHFIVPITVVSFCYL). Over 148–179 (RIWVLVLQVRRRVKSETKPRLKPSDFRNFLTM) the chain is Cytoplasmic. The chain crosses the membrane as a helical span at residues 180–200 (FVVFVIFAFCWAPLNFIGLAV). The Extracellular portion of the chain corresponds to 201 to 213 (AINPSEMAPKVPE). The chain crosses the membrane as a helical span at residues 214–234 (WLFIISYFMAYFNSCLNAIIY). Over 235–289 (GLLNQNFRNEYKRILMSLWMPRLFFQDTSKGGTDGQKSKPSPALNNNDQMKTDTL) the chain is Cytoplasmic. The segment at 264 to 289 (KGGTDGQKSKPSPALNNNDQMKTDTL) is disordered.

The protein belongs to the G-protein coupled receptor 1 family. Brain and kidney, with trace levels in lungs.

It localises to the cell membrane. In terms of biological role, high affinity receptor for melatonin. The activity of this receptor is mediated by pertussis toxin sensitive G proteins that inhibits adenylate cyclase activity. The polypeptide is Melatonin receptor type 1B (Gallus gallus (Chicken)).